The primary structure comprises 1378 residues: DNA-directed RNA polymerase subunit beta' (1378 aa).

Positions 69, 71, 84, and 87 each coordinate Zn(2+). Residues D460, D462, and D464 each contribute to the Mg(2+) site. Zn(2+)-binding residues include C808, C882, C889, and C892.

The protein belongs to the RNA polymerase beta' chain family. In terms of assembly, the RNAP catalytic core consists of 2 alpha, 1 beta, 1 beta' and 1 omega subunit. When a sigma factor is associated with the core the holoenzyme is formed, which can initiate transcription. Requires Mg(2+) as cofactor. Zn(2+) serves as cofactor.

The enzyme catalyses RNA(n) + a ribonucleoside 5'-triphosphate = RNA(n+1) + diphosphate. In terms of biological role, DNA-dependent RNA polymerase catalyzes the transcription of DNA into RNA using the four ribonucleoside triphosphates as substrates. The protein is DNA-directed RNA polymerase subunit beta' of Rickettsia canadensis (strain McKiel).